Here is a 714-residue protein sequence, read N- to C-terminus: DNA ligase (714 aa).

Residues 59 to 63 (DYEYD), 108 to 109 (SL), and Glu-139 each bind NAD(+). Lys-141 acts as the N6-AMP-lysine intermediate in catalysis. NAD(+) contacts are provided by Arg-162, Glu-200, Lys-325, and Lys-349. Residues Cys-443, Cys-446, Cys-461, and Cys-466 each coordinate Zn(2+). Residues 624-713 (VVENIFEGKT…IPDDLKDKVH (90 aa)) enclose the BRCT domain.

It belongs to the NAD-dependent DNA ligase family. LigA subfamily. Mg(2+) is required as a cofactor. It depends on Mn(2+) as a cofactor.

It catalyses the reaction NAD(+) + (deoxyribonucleotide)n-3'-hydroxyl + 5'-phospho-(deoxyribonucleotide)m = (deoxyribonucleotide)n+m + AMP + beta-nicotinamide D-nucleotide.. Functionally, DNA ligase that catalyzes the formation of phosphodiester linkages between 5'-phosphoryl and 3'-hydroxyl groups in double-stranded DNA using NAD as a coenzyme and as the energy source for the reaction. It is essential for DNA replication and repair of damaged DNA. In Persephonella marina (strain DSM 14350 / EX-H1), this protein is DNA ligase.